Here is a 706-residue protein sequence, read N- to C-terminus: Septin ring organizing protein mid2 (706 aa).

2 disordered regions span residues 62–102 (STAP…PFST) and 145–180 (DEAS…KKNP). Composition is skewed to polar residues over residues 81-90 (YDQTLSNSSS) and 149-169 (NKSS…SNQG). A Phosphoserine modification is found at Ser-379. The 106-residue stretch at 583–688 (TLLCDGYLCQ…WMSTLRQHLG (106 aa)) folds into the PH domain.

It belongs to the BUD4 family.

Its subcellular location is the cytoplasm. The protein localises to the cell cortex. It localises to the cytoskeleton. Functionally, responsible for the proper stability and function of septins during cytokinesis. Required for the correct formation of the medial septin ring structure in mitosis and for the proper localization of endo-glucanases agn1 and eng1, which are needed for efficient cell separation. May act as a landmark for the localization of hydrolytic proteins to the medial region. The sequence is that of Septin ring organizing protein mid2 (mid2) from Schizosaccharomyces pombe (strain 972 / ATCC 24843) (Fission yeast).